Reading from the N-terminus, the 940-residue chain is Translation initiation factor IF-2 (940 aa).

4 disordered regions span residues P116–T137, E151–S196, A210–V294, and H318–R346. The segment covering L121–T137 has biased composition (polar residues). Residues P159 to E180 are compositionally biased toward acidic residues. Positions P181–E193 are enriched in low complexity. A compositionally biased stretch (basic and acidic residues) spans K213–A239. A compositionally biased stretch (basic residues) spans K282–V294. A compositionally biased stretch (low complexity) spans G326–S337. One can recognise a tr-type G domain in the interval A441–S610. Positions G450–T457 are G1. GTP is bound at residue G450–T457. The tract at residues G475–H479 is G2. The interval D496 to G499 is G3. GTP contacts are provided by residues D496–H500 and N550–D553. A G4 region spans residues N550–D553. The G5 stretch occupies residues S586 to Q588.

Belongs to the TRAFAC class translation factor GTPase superfamily. Classic translation factor GTPase family. IF-2 subfamily.

The protein resides in the cytoplasm. Its function is as follows. One of the essential components for the initiation of protein synthesis. Protects formylmethionyl-tRNA from spontaneous hydrolysis and promotes its binding to the 30S ribosomal subunits. Also involved in the hydrolysis of GTP during the formation of the 70S ribosomal complex. The polypeptide is Translation initiation factor IF-2 (Teredinibacter turnerae (strain ATCC 39867 / T7901)).